We begin with the raw amino-acid sequence, 361 residues long: Phospho-N-acetylmuramoyl-pentapeptide-transferase (361 aa).

Helical transmembrane passes span Leu28–Leu48, Thr74–Leu94, Ile99–Ala119, Ser133–Asp153, Leu168–Ser188, Val203–Ile223, Thr236–Phe256, Val263–Ile283, Ile288–Val308, and Lys338–Leu358.

The protein belongs to the glycosyltransferase 4 family. MraY subfamily. It depends on Mg(2+) as a cofactor.

It is found in the cell inner membrane. The enzyme catalyses UDP-N-acetyl-alpha-D-muramoyl-L-alanyl-gamma-D-glutamyl-meso-2,6-diaminopimeloyl-D-alanyl-D-alanine + di-trans,octa-cis-undecaprenyl phosphate = di-trans,octa-cis-undecaprenyl diphospho-N-acetyl-alpha-D-muramoyl-L-alanyl-D-glutamyl-meso-2,6-diaminopimeloyl-D-alanyl-D-alanine + UMP. The protein operates within cell wall biogenesis; peptidoglycan biosynthesis. In terms of biological role, catalyzes the initial step of the lipid cycle reactions in the biosynthesis of the cell wall peptidoglycan: transfers peptidoglycan precursor phospho-MurNAc-pentapeptide from UDP-MurNAc-pentapeptide onto the lipid carrier undecaprenyl phosphate, yielding undecaprenyl-pyrophosphoryl-MurNAc-pentapeptide, known as lipid I. The chain is Phospho-N-acetylmuramoyl-pentapeptide-transferase from Rickettsia akari (strain Hartford).